A 137-amino-acid polypeptide reads, in one-letter code: Thionin-like protein 1 (137 aa).

The N-terminal stretch at 1 to 23 (MEDKRVAMLVVMMLVMGNMLIEA) is a signal peptide.

It belongs to the plant thionin (TC 1.C.44) family. Is disulfide-linked.

The protein resides in the secreted. Functionally, may be involved in plant defense. This chain is Thionin-like protein 1, found in Arabidopsis thaliana (Mouse-ear cress).